A 476-amino-acid polypeptide reads, in one-letter code: Bifunctional protein HldE (476 aa).

The tract at residues 1–318 (MKPILPDYNN…AEAIHGSRDT (318 aa)) is ribokinase. ATP is bound at residue 195–198 (NMSE). The active site involves Asp264. Residues 344 to 476 (MTNGCFDILH…IIDAIKGGRG (133 aa)) are cytidylyltransferase.

This sequence in the N-terminal section; belongs to the carbohydrate kinase PfkB family. In the C-terminal section; belongs to the cytidylyltransferase family. Homodimer.

The enzyme catalyses D-glycero-beta-D-manno-heptose 7-phosphate + ATP = D-glycero-beta-D-manno-heptose 1,7-bisphosphate + ADP + H(+). It catalyses the reaction D-glycero-beta-D-manno-heptose 1-phosphate + ATP + H(+) = ADP-D-glycero-beta-D-manno-heptose + diphosphate. Its pathway is nucleotide-sugar biosynthesis; ADP-L-glycero-beta-D-manno-heptose biosynthesis; ADP-L-glycero-beta-D-manno-heptose from D-glycero-beta-D-manno-heptose 7-phosphate: step 1/4. The protein operates within nucleotide-sugar biosynthesis; ADP-L-glycero-beta-D-manno-heptose biosynthesis; ADP-L-glycero-beta-D-manno-heptose from D-glycero-beta-D-manno-heptose 7-phosphate: step 3/4. It functions in the pathway bacterial outer membrane biogenesis; LPS core biosynthesis. Functionally, catalyzes the phosphorylation of D-glycero-D-manno-heptose 7-phosphate at the C-1 position to selectively form D-glycero-beta-D-manno-heptose-1,7-bisphosphate. Its function is as follows. Catalyzes the ADP transfer from ATP to D-glycero-beta-D-manno-heptose 1-phosphate, yielding ADP-D-glycero-beta-D-manno-heptose. This is Bifunctional protein HldE from Vibrio vulnificus (strain CMCP6).